The following is a 310-amino-acid chain: Protoheme IX farnesyltransferase (310 aa).

Helical transmembrane passes span 21–43 (LLKPRVMSLVVFTALVGLLVAPV), 48–70 (MIALTGILFIALGAGASGALNMW), 95–115 (GEALGIGLALSGIAVVMLGLA), 118–138 (LFAAGLLAFTIFFYAVVYSMW), 147–167 (IVIGGAAGAFPPMIGWAVATG), 174–194 (LFMFALIFMWTPPHFWSLALF), 220–240 (VLVYSLLLAPLAVAGAFTGIG), 243–263 (LYLATALALNGWLLVGAVRIW), and 289–309 (LFLHFGAILAEAALKPYGLGG).

Belongs to the UbiA prenyltransferase family. Protoheme IX farnesyltransferase subfamily. In terms of assembly, interacts with CtaA.

It localises to the cell inner membrane. It catalyses the reaction heme b + (2E,6E)-farnesyl diphosphate + H2O = Fe(II)-heme o + diphosphate. Its pathway is porphyrin-containing compound metabolism; heme O biosynthesis; heme O from protoheme: step 1/1. Converts heme B (protoheme IX) to heme O by substitution of the vinyl group on carbon 2 of heme B porphyrin ring with a hydroxyethyl farnesyl side group. The polypeptide is Protoheme IX farnesyltransferase (Cereibacter sphaeroides (strain KD131 / KCTC 12085) (Rhodobacter sphaeroides)).